We begin with the raw amino-acid sequence, 604 residues long: Protein TAX4 (604 aa).

5 disordered regions span residues 38–77, 133–249, 267–300, 338–380, and 394–428; these read HPNGNAGSAERPRHLKVESAPVVKSEPSLPRMRQPEPRSI, FSNR…RQQE, GTLPDLIPRSQRKTSKPRFKHKLLRSPEQQQENL, DETF…KGLK, and PFPHHHHHHHQLHNPNSHHLHTHHHTSSHKFNEDK. A compositionally biased stretch (polar residues) spans 176–185; the sequence is YDNNVRSRSI. 2 stretches are compositionally biased toward low complexity: residues 186–203 and 224–240; these read SPQVSYSTSLSSSCSISS and SMSSYSLASKASAKASL. Basic residues-rich tracts occupy residues 276–290, 366–379, and 396–421; these read SQRKTSKPRFKHKLL, KKKKSRRSKIKKGL, and PHHHHHHHQLHNPNSHHLHTHHHTSS. One can recognise an EH domain in the interval 469–559; it reads ANEDDESHLQ…RVWNSVDGYV (91 aa).

Belongs to the IRS4 family. Interacts with INP51.

With IRS4, acts as a positive regulator of INP51 activity and phosphatidylinositol 4,5-bisphosphate turnover. Negatively regulates signaling through the cell integrity pathway, including the MAP kinase SLT2. The chain is Protein TAX4 (TAX4) from Saccharomyces cerevisiae (strain YJM789) (Baker's yeast).